The sequence spans 122 residues: MRLTSILVLVIAATFHTTGTALTLTKDSKAGIANGDSPASGDFIDANSARLLRRVEKDKVDYEQDEQRSFGALKDAVKKLNPVTAVKKFFKQRAKRKKVIQTARDADNNLAWAMKEVYKAAN.

Positions 1–21 (MRLTSILVLVIAATFHTTGTA) are cleaved as a signal peptide. Residues 50 to 68 (RLLRRVEKDKVDYEQDEQR) carry the RxLR-dEER motif. Residues 69 to 86 (SFGALKDAVKKLNPVTAV) form a TAP1-binding region. Positions 87 to 98 (KKFFKQRAKRKK) are nuclear localization signal (NLS).

Belongs to the RxLR effector family. In terms of assembly, interacts with host acetyl transferase TAP1.

Its subcellular location is the secreted. It is found in the host nucleus. Its function is as follows. Effector that suppresses plant defense responses during the early stages of pathogen infection. Suppresses cell death induced by effectors and PAMPs in plant hosts. Interacts with host acetyltransferase TAP1 and causes TAP1 relocation into the nucleus where it acetylates histones H2A and H3 during early infection, thereby promoting susceptibility of host plant to P.sojae. The protein is RxLR effector protein Avh52 of Phytophthora sojae (strain P6497) (Soybean stem and root rot agent).